A 228-amino-acid polypeptide reads, in one-letter code: Phosphoribosylformylglycinamidine synthase subunit PurQ (228 aa).

The 227-residue stretch at 2–228 (TVVVVQFGGS…DGKGILQAFG (227 aa)) folds into the Glutamine amidotransferase type-1 domain. Residue C88 is the Nucleophile of the active site. Active-site residues include H205 and E207.

Part of the FGAM synthase complex composed of 1 PurL, 1 PurQ and 2 PurS subunits.

Its subcellular location is the cytoplasm. It catalyses the reaction N(2)-formyl-N(1)-(5-phospho-beta-D-ribosyl)glycinamide + L-glutamine + ATP + H2O = 2-formamido-N(1)-(5-O-phospho-beta-D-ribosyl)acetamidine + L-glutamate + ADP + phosphate + H(+). The enzyme catalyses L-glutamine + H2O = L-glutamate + NH4(+). Its pathway is purine metabolism; IMP biosynthesis via de novo pathway; 5-amino-1-(5-phospho-D-ribosyl)imidazole from N(2)-formyl-N(1)-(5-phospho-D-ribosyl)glycinamide: step 1/2. In terms of biological role, part of the phosphoribosylformylglycinamidine synthase complex involved in the purines biosynthetic pathway. Catalyzes the ATP-dependent conversion of formylglycinamide ribonucleotide (FGAR) and glutamine to yield formylglycinamidine ribonucleotide (FGAM) and glutamate. The FGAM synthase complex is composed of three subunits. PurQ produces an ammonia molecule by converting glutamine to glutamate. PurL transfers the ammonia molecule to FGAR to form FGAM in an ATP-dependent manner. PurS interacts with PurQ and PurL and is thought to assist in the transfer of the ammonia molecule from PurQ to PurL. The sequence is that of Phosphoribosylformylglycinamidine synthase subunit PurQ from Haloquadratum walsbyi (strain DSM 16790 / HBSQ001).